The chain runs to 367 residues: Histidinol-phosphate aminotransferase (367 aa).

An N6-(pyridoxal phosphate)lysine modification is found at Lys226.

The protein belongs to the class-II pyridoxal-phosphate-dependent aminotransferase family. Histidinol-phosphate aminotransferase subfamily. In terms of assembly, homodimer. Pyridoxal 5'-phosphate serves as cofactor.

It carries out the reaction L-histidinol phosphate + 2-oxoglutarate = 3-(imidazol-4-yl)-2-oxopropyl phosphate + L-glutamate. Its pathway is amino-acid biosynthesis; L-histidine biosynthesis; L-histidine from 5-phospho-alpha-D-ribose 1-diphosphate: step 7/9. The chain is Histidinol-phosphate aminotransferase from Wolinella succinogenes (strain ATCC 29543 / DSM 1740 / CCUG 13145 / JCM 31913 / LMG 7466 / NCTC 11488 / FDC 602W) (Vibrio succinogenes).